The following is a 241-amino-acid chain: DNA repair protein RecO (241 aa).

It belongs to the RecO family.

Functionally, involved in DNA repair and RecF pathway recombination. The chain is DNA repair protein RecO from Phocaeicola vulgatus (strain ATCC 8482 / DSM 1447 / JCM 5826 / CCUG 4940 / NBRC 14291 / NCTC 11154) (Bacteroides vulgatus).